An 824-amino-acid polypeptide reads, in one-letter code: Acyl-homoserine lactone acylase QuiP (824 aa).

The first 26 residues, 1 to 26, serve as a signal peptide directing secretion; the sequence is MASPALRHFLPRFGAAAAAASFLSLA. Ser-264 acts as the Nucleophile in catalysis.

The protein belongs to the peptidase S45 family. In terms of assembly, heterodimer of an alpha subunit and a beta subunit processed from the same precursor.

It is found in the periplasm. It carries out the reaction an N-acyl-L-homoserine lactone + H2O = L-homoserine lactone + a carboxylate. In terms of biological role, catalyzes the deacylation of acyl-homoserine lactone (AHL or acyl-HSL), releasing homoserine lactone (HSL) and the corresponding fatty acid. Possesses a specificity for the degradation of long-chain acyl-HSLs (side chains of seven or more carbons in length). This is Acyl-homoserine lactone acylase QuiP (quiP) from Pseudomonas syringae pv. tomato (strain ATCC BAA-871 / DC3000).